Consider the following 142-residue polypeptide: Large ribosomal subunit protein uL13 (142 aa).

This sequence belongs to the universal ribosomal protein uL13 family. In terms of assembly, part of the 50S ribosomal subunit.

Its function is as follows. This protein is one of the early assembly proteins of the 50S ribosomal subunit, although it is not seen to bind rRNA by itself. It is important during the early stages of 50S assembly. The protein is Large ribosomal subunit protein uL13 of Stenotrophomonas maltophilia (strain R551-3).